The sequence spans 331 residues: DNA-directed RNA polymerase subunit alpha (331 aa).

The segment at 1-233 is alpha N-terminal domain (alpha-NTD); sequence MVREKVTVST…DLFIPFLHAE (233 aa). Residues 265–331 are alpha C-terminal domain (alpha-CTD); it reads KEIELKYIFI…GILEKHFTID (67 aa).

Belongs to the RNA polymerase alpha chain family. In terms of assembly, in plastids the minimal PEP RNA polymerase catalytic core is composed of four subunits: alpha, beta, beta', and beta''. When a (nuclear-encoded) sigma factor is associated with the core the holoenzyme is formed, which can initiate transcription.

It localises to the plastid. Its subcellular location is the chloroplast. The enzyme catalyses RNA(n) + a ribonucleoside 5'-triphosphate = RNA(n+1) + diphosphate. Functionally, DNA-dependent RNA polymerase catalyzes the transcription of DNA into RNA using the four ribonucleoside triphosphates as substrates. This is DNA-directed RNA polymerase subunit alpha from Vitis vinifera (Grape).